Here is a 520-residue protein sequence, read N- to C-terminus: Laccase-2 (520 aa).

Residues 1-19 (MRFSNAFVLVAACISSVLA) form the signal peptide. 3 consecutive Plastocyanin-like domains span residues 21–145 (TKTF…FVVY), 157–305 (VDDE…LTLA), and 375–488 (TVPV…FAEA). 2 residues coordinate Cu cation: His82 and His84. Disulfide bonds link Cys103/Cys509 and Cys135/Cys229. Asn108 is a glycosylation site (N-linked (GlcNAc...) asparagine). Positions 127 and 129 each coordinate Cu cation. N-linked (GlcNAc...) asparagine glycosylation is found at Asn241 and Asn299. Residues His417, His420, His422, His470, Cys471, His472, and His476 each coordinate Cu cation. The N-linked (GlcNAc...) asparagine glycan is linked to Asn492.

The protein belongs to the multicopper oxidase family. The cofactor is Cu cation.

The protein localises to the secreted. The catalysed reaction is 4 hydroquinone + O2 = 4 benzosemiquinone + 2 H2O. Its function is as follows. Lignin degradation and detoxification of lignin-derived products. In Agaricus bisporus (White button mushroom), this protein is Laccase-2 (lcc2).